Reading from the N-terminus, the 351-residue chain is Terpene cyclase sdgD (351 aa).

The next 9 membrane-spanning stretches (helical) occupy residues 7-27 (INFI…TILI), 62-82 (TGVP…WPVI), 89-109 (LSLL…LLLL), 126-146 (WVGL…YCAI), 160-180 (IPHV…LVAL), 193-213 (VVVA…FMAS), 229-249 (IYIF…LASL), 281-301 (FLQW…VAVY), and 316-336 (LEVC…LLIW).

This sequence belongs to the membrane-bound ascI terpene cyclase family.

It localises to the membrane. The protein operates within secondary metabolite biosynthesis. In terms of biological role, epoxide hydrolase; part of the gene cluster that mediates the biosynthesis of the polyenes aspernidgulenes. The carbon backbone of aspernidgulenes is synthesized by the HR-PKS sdgA, which accepts acetyl-CoA as the starter unit and performs malonyl-CoA extensions as well as regioselective methylation and reduction. The resulting nonaketide offloads the HR-PKS by intramolecular lactonization to yield the 5,6-dihydro-alpha-pyrone-containing hexaenoic acids preaspernidgulene A1 and A2. The FAD-dependent monooxygenase sdgC then installs the first epoxide on the penultimate double bond. Subsequently, the FAD-dependent monooxygenase sdgF presumably generates a ketone intermediate through Meinwald rearrangement involving a hydride shift. Next, sdgC introduces another epoxide on the last olefin of the ketone intermediate after E/Z isomerization. The epoxide hydrolase sdgD then catalyzes stereospecific cyclization of the 5,6-dihydro-alpha-pyrone and opening of the epoxide ring to form an oxygenated trimethylcyclopentanone and an oxabicyclo[2.2.1]heptane unit. Finally, the bicyclic unit undergoes hydrolytic cleavage, either spontaneously or catalyzed by sdgD, to assemble the dimethyl-gamma-lactone moiety in aspernidgulene A1. This Emericella nidulans (strain FGSC A4 / ATCC 38163 / CBS 112.46 / NRRL 194 / M139) (Aspergillus nidulans) protein is Terpene cyclase sdgD.